Here is a 66-residue protein sequence, read N- to C-terminus: Large ribosomal subunit protein bL31 (66 aa).

Residues cysteine 16, cysteine 18, cysteine 36, and cysteine 39 each coordinate Zn(2+).

Belongs to the bacterial ribosomal protein bL31 family. Type A subfamily. As to quaternary structure, part of the 50S ribosomal subunit. Requires Zn(2+) as cofactor.

Functionally, binds the 23S rRNA. In Pelobacter propionicus (strain DSM 2379 / NBRC 103807 / OttBd1), this protein is Large ribosomal subunit protein bL31.